A 127-amino-acid polypeptide reads, in one-letter code: Small ribosomal subunit protein uS11 (127 aa).

This sequence belongs to the universal ribosomal protein uS11 family. As to quaternary structure, part of the 30S ribosomal subunit. Interacts with proteins S7 and S18. Binds to IF-3.

Functionally, located on the platform of the 30S subunit, it bridges several disparate RNA helices of the 16S rRNA. Forms part of the Shine-Dalgarno cleft in the 70S ribosome. The protein is Small ribosomal subunit protein uS11 of Streptococcus mutans serotype c (strain ATCC 700610 / UA159).